The chain runs to 311 residues: Tryptophan 2,3-dioxygenase (311 aa).

The segment at M1–D37 is disordered. The segment covering A17 to H27 has biased composition (low complexity). Substrate contacts are provided by residues F80–H84, Y142, and R146. H269 is a heme binding site. T283 lines the substrate pocket.

Belongs to the tryptophan 2,3-dioxygenase family. As to quaternary structure, homotetramer. Heme is required as a cofactor.

The catalysed reaction is L-tryptophan + O2 = N-formyl-L-kynurenine. Its pathway is amino-acid degradation; L-tryptophan degradation via kynurenine pathway; L-kynurenine from L-tryptophan: step 1/2. Its function is as follows. Heme-dependent dioxygenase that catalyzes the oxidative cleavage of the L-tryptophan (L-Trp) pyrrole ring and converts L-tryptophan to N-formyl-L-kynurenine. Catalyzes the oxidative cleavage of the indole moiety. In Burkholderia cenocepacia (strain ATCC BAA-245 / DSM 16553 / LMG 16656 / NCTC 13227 / J2315 / CF5610) (Burkholderia cepacia (strain J2315)), this protein is Tryptophan 2,3-dioxygenase.